Reading from the N-terminus, the 432-residue chain is D-amino acid dehydrogenase (432 aa).

3–17 (VVILGSGVVGVASAW) serves as a coordination point for FAD.

Belongs to the DadA oxidoreductase family. Requires FAD as cofactor.

The catalysed reaction is a D-alpha-amino acid + A + H2O = a 2-oxocarboxylate + AH2 + NH4(+). Its pathway is amino-acid degradation; D-alanine degradation; NH(3) and pyruvate from D-alanine: step 1/1. Oxidative deamination of D-amino acids. This Escherichia coli O127:H6 (strain E2348/69 / EPEC) protein is D-amino acid dehydrogenase.